The following is a 393-amino-acid chain: Phosphoglycerate kinase (393 aa).

Residues 21–23 (DFN), Arg-37, 60–63 (HLGR), Arg-119, and Arg-152 contribute to the substrate site. ATP is bound by residues Lys-202, Gly-291, Glu-322, and 348–351 (GGDT).

The protein belongs to the phosphoglycerate kinase family. As to quaternary structure, monomer.

It is found in the cytoplasm. It catalyses the reaction (2R)-3-phosphoglycerate + ATP = (2R)-3-phospho-glyceroyl phosphate + ADP. It participates in carbohydrate degradation; glycolysis; pyruvate from D-glyceraldehyde 3-phosphate: step 2/5. This is Phosphoglycerate kinase from Coprothermobacter proteolyticus (strain ATCC 35245 / DSM 5265 / OCM 4 / BT).